A 218-amino-acid polypeptide reads, in one-letter code: DNA-directed RNA polymerases IV and V subunit 5B (218 aa).

The protein belongs to the archaeal Rpo5/eukaryotic RPB5 RNA polymerase subunit family. As to quaternary structure, component of the RNA polymerase IV and V complexes. Interacts with NRPD1. In terms of tissue distribution, expressed inleaves, flower buds, flowers and siliques.

It is found in the nucleus. Functionally, DNA-dependent RNA polymerase catalyzes the transcription of DNA into RNA using the four ribonucleoside triphosphates as substrates. Component of RNA polymerases IV and V which mediate short-interfering RNAs (siRNA) accumulation and subsequent RNA-directed DNA methylation-dependent (RdDM) transcriptional gene silencing (TGS) of endogenous repeated sequences, including transposable elements. This chain is DNA-directed RNA polymerases IV and V subunit 5B (NRPD5B), found in Arabidopsis thaliana (Mouse-ear cress).